A 344-amino-acid polypeptide reads, in one-letter code: Fructose-1,6-bisphosphatase class 1 (344 aa).

Positions 90, 109, 111, and 112 each coordinate Mg(2+). Substrate contacts are provided by residues 112 to 115 (DGSS) and Asn200. Residue Glu271 coordinates Mg(2+).

It belongs to the FBPase class 1 family. In terms of assembly, homotetramer. Mg(2+) is required as a cofactor.

Its subcellular location is the cytoplasm. It carries out the reaction beta-D-fructose 1,6-bisphosphate + H2O = beta-D-fructose 6-phosphate + phosphate. It participates in carbohydrate biosynthesis; gluconeogenesis. The sequence is that of Fructose-1,6-bisphosphatase class 1 from Nitrobacter vulgaris.